The following is a 303-amino-acid chain: NAC domain-containing protein 48 (303 aa).

The region spanning 9–159 is the NAC domain; that stretch reads LPPGFRFHPT…DWVLCRIYNK (151 aa).

As to quaternary structure, interacts with NAC071. Widely expressed.

Its subcellular location is the nucleus. Its function is as follows. Transcription activator that binds to the promoter of the stress response gene LEA19. Involved in tolerance to abiotic stresses. Transcription activator involved in response to abiotic and biotic stresses. Involved in drought and salt stress responses, and defense response to the rice blast fungus. Transcription activator involved tolerance to cold and salt stresses. Transcription activator involved in tolerance to drought stress. Targets directly and activates genes involved in membrane modification, nicotianamine (NA) biosynthesis, glutathione relocation, accumulation of phosphoadenosine phosphosulfate and glycosylation in roots. Controls root growth at early vegetative stage through chromatin modification and histone lysine deacytaltion by HDAC1. The chain is NAC domain-containing protein 48 from Oryza sativa subsp. japonica (Rice).